Here is a 996-residue protein sequence, read N- to C-terminus: GPI ethanolamine phosphate transferase 1 (996 aa).

Topologically, residues 1–8 (MAAFPRFR) are cytoplasmic. A helical membrane pass occupies residues 9 to 29 (FLAIAVIFHFAYIFSIFDIYF). The Lumenal portion of the chain corresponds to 30–463 (VSPIETGMRL…LQTYDWLFLR (434 aa)). Asparagine 47, asparagine 147, and asparagine 210 each carry an N-linked (GlcNAc...) asparagine glycan. The helical transmembrane segment at 464–484 (ALITIGYLGWIAYALTTVVDL) threads the bilayer. Residues 485 to 495 (HVLHGRVRPSR) are Cytoplasmic-facing. Residues 496–516 (TLGGGLFFTSVLVALYASLVI) form a helical membrane-spanning segment. At 517–518 (SK) the chain is on the lumenal side. Residues 519–539 (SPLTYYVYAFFPVFFWEEVYA) traverse the membrane as a helical segment. Residues 540 to 560 (HRESLAAGRKELLGHINSGGS) are Cytoplasmic-facing. A helical transmembrane segment spans residues 561–581 (VASFVLNSALYVGVIESLALG). Topologically, residues 582–586 (YIHRE) are lumenal. A helical transmembrane segment spans residues 587–607 (ILSVLFVLGSFWPFTHGLSFL). Residues 608–612 (KKHGA) lie on the Cytoplasmic side of the membrane. The chain crosses the membrane as a helical span at residues 613-633 (LSATWFLACIAMSTFTLLPAM). At 634-637 (KAEN) the chain is on the lumenal side. A helical transmembrane segment spans residues 638–658 (VNLITIGGVLMVVIGLLYLIF). Topologically, residues 659 to 681 (EDFVLADFSWNAKPTSRNHLSRS) are cytoplasmic. The chain crosses the membrane as a helical span at residues 682 to 702 (LVGIQVGLTVLSIIITRSSAL). At 703–715 (SLQAKQGLPRGNQ) the chain is on the lumenal side. Residues 716–734 (IMGWVTLVASLLMPLAYRL) traverse the membrane as a helical segment. Topologically, residues 735–754 (RPNNHYMHRILVIFLTCAPT) are cytoplasmic. The chain crosses the membrane as a helical span at residues 755 to 775 (FVILTISYEGLFYLVFSALLV). The Lumenal portion of the chain corresponds to 776–822 (SWVRLEHAVQKFTSSKAPQTAATKKPTTTTESHLPAPFRPLTLHDAR). A helical transmembrane segment spans residues 823 to 843 (VALFFFILLQSAFFSTGNVAS). Residues 844–865 (VSSFSLDSVYRLIPIFDPFSQG) are Cytoplasmic-facing. A helical membrane pass occupies residues 866–886 (AMLILKLMIPFALISANLGIL). Over 887-895 (NKRLGVAPS) the chain is Lumenal. Residues 896–916 (ALFMVVMGISDILTLYFFWVV) form a helical membrane-spanning segment. Residues 917–932 (KDEGSWLEIGSTISHF) lie on the Cytoplasmic side of the membrane. A helical transmembrane segment spans residues 933-953 (VIASLLCVFVSALEPVSAAFI). Residues 954 to 996 (AGVEVGEESELKEEGKVAEKVVEKVNEAVEGLVSGGDGGGDES) are Lumenal-facing.

The protein belongs to the PIGG/PIGN/PIGO family. PIGN subfamily.

Its subcellular location is the endoplasmic reticulum membrane. It participates in glycolipid biosynthesis; glycosylphosphatidylinositol-anchor biosynthesis. Its function is as follows. Ethanolamine phosphate transferase involved in glycosylphosphatidylinositol-anchor biosynthesis. Transfers ethanolamine phosphate to the first alpha-1,4-linked mannose of the glycosylphosphatidylinositol precursor of GPI-anchor. In Neurospora crassa (strain ATCC 24698 / 74-OR23-1A / CBS 708.71 / DSM 1257 / FGSC 987), this protein is GPI ethanolamine phosphate transferase 1 (mcd-4).